We begin with the raw amino-acid sequence, 380 residues long: Cytochrome b (380 aa).

The next 4 membrane-spanning stretches (helical) occupy residues 33 to 53 (SGSL…FLAM), 77 to 98 (WLIR…YLHV), 113 to 133 (WNIG…GYVL), and 178 to 198 (FFAF…IHLL). Residues His-83 and His-97 each contribute to the heme b site. Positions 182 and 196 each coordinate heme b. His-201 contacts a ubiquinone. A run of 4 helical transmembrane segments spans residues 226–246 (YKDL…ALFS), 288–308 (LGGV…PILH), 320–340 (LSQI…WIGG), and 347–367 (FVLI…IALP).

It belongs to the cytochrome b family. As to quaternary structure, the cytochrome bc1 complex contains 3 respiratory subunits (MT-CYB, CYC1 and UQCRFS1), 2 core proteins (UQCRC1 and UQCRC2) and probably 6 low-molecular weight proteins. The cofactor is heme b.

It localises to the mitochondrion inner membrane. In terms of biological role, component of the ubiquinol-cytochrome c reductase complex (complex III or cytochrome b-c1 complex) that is part of the mitochondrial respiratory chain. The b-c1 complex mediates electron transfer from ubiquinol to cytochrome c. Contributes to the generation of a proton gradient across the mitochondrial membrane that is then used for ATP synthesis. This Polyodon spathula (North American paddlefish) protein is Cytochrome b (mt-cyb).